A 349-amino-acid polypeptide reads, in one-letter code: tRNA pseudouridine synthase D (349 aa).

Residue Phe26 participates in substrate binding. Asp79 (nucleophile) is an active-site residue. Asn128 provides a ligand contact to substrate. One can recognise a TRUD domain in the interval 154 to 302 (GVPNYFGSQR…VEGARRAILL (149 aa)). Residue Phe328 participates in substrate binding.

This sequence belongs to the pseudouridine synthase TruD family.

It carries out the reaction uridine(13) in tRNA = pseudouridine(13) in tRNA. Functionally, responsible for synthesis of pseudouridine from uracil-13 in transfer RNAs. The protein is tRNA pseudouridine synthase D of Yersinia enterocolitica serotype O:8 / biotype 1B (strain NCTC 13174 / 8081).